Reading from the N-terminus, the 745-residue chain is Immunoglobulin superfamily containing leucine-rich repeat protein 2 (745 aa).

The signal sequence occupies residues methionine 1 to alanine 19. One can recognise an LRRNT domain in the interval cysteine 20–alanine 51. At cysteine 20–serine 589 the chain is on the extracellular side. 2 N-linked (GlcNAc...) asparagine glycosylation sites follow: asparagine 52 and asparagine 73. LRR repeat units lie at residues asparagine 52–asparagine 73, glutamine 76–valine 97, glutamine 100–serine 123, alanine 124–alanine 145, and aspartate 148–alanine 169. An N-linked (GlcNAc...) asparagine glycan is attached at asparagine 121. Residues asparagine 181 to proline 232 enclose the LRRCT domain. Positions proline 233–threonine 372 constitute an Ig-like domain. A disulfide bridge links cysteine 260 with cysteine 356. A compositionally biased stretch (basic and acidic residues) spans lysine 290 to aspartate 300. The tract at residues lysine 290–proline 328 is disordered. Pro residues predominate over residues threonine 317–proline 328. N-linked (GlcNAc...) asparagine glycans are attached at residues asparagine 338 and asparagine 365. A disordered region spans residues alanine 376–leucine 423. N-linked (GlcNAc...) asparagine glycosylation is found at asparagine 474 and asparagine 563. The chain crosses the membrane as a helical span at residues leucine 590 to glycine 610. Topologically, residues alanine 611 to glycine 745 are cytoplasmic. The segment at serine 654–alanine 697 is disordered. The span at glycine 665–glutamine 683 shows a compositional bias: acidic residues. Tyrosine 719 bears the Phosphotyrosine mark. Serine 720 is modified (phosphoserine).

Homomultimer. Interacts with NTRK1/TrkA. As to expression, at 11.5 dpc, expressed in spinal nerves, their roots and the ventral spinal cord. At 12.5 dpc, detected in the ventral spinal cord, dorsal root ganglia (DRG), dorsal and ventral roots and sympathetic chain ganglia. At 12.5 dpc, expressed in almost all motor neurons which also express RET and in almost all DRG sensory neurons which also express NTRK1. At 18.5 dpc, expressed only in a subset of NTRK1-expressing neurons but still expressed in nearly all RET-expressing neurons.

The protein resides in the cell membrane. Required for axon extension during neural development. This Mus musculus (Mouse) protein is Immunoglobulin superfamily containing leucine-rich repeat protein 2 (Islr2).